Reading from the N-terminus, the 233-residue chain is Large ribosomal subunit protein uL22m (233 aa).

The protein belongs to the universal ribosomal protein uL22 family. As to quaternary structure, component of the mitochondrial ribosome large subunit (39S) which comprises a 16S rRNA and about 50 distinct proteins.

The protein resides in the mitochondrion. This chain is Large ribosomal subunit protein uL22m (mRpL22), found in Drosophila melanogaster (Fruit fly).